Reading from the N-terminus, the 399-residue chain is Multi-drug resistance efflux pump PmrA (399 aa).

10 helical membrane-spanning segments follow: residues 12–34 (IAWF…MPIF), 49–71 (AGLA…GILA), 84–106 (GLAM…LIFL), 140–162 (LSTG…AELF), 167–186 (VFLL…ICFI), 217–239 (LFLT…ALYV), 248–270 (LLFV…AGVM), 306–328 (LGLY…NALL), 340–362 (VFAF…GSAV), and 366–388 (FGYH…FNLI).

The protein belongs to the major facilitator superfamily. TCR/Tet family.

It is found in the cell membrane. In terms of biological role, efflux pump for various substrates. This Streptococcus pneumoniae serotype 4 (strain ATCC BAA-334 / TIGR4) protein is Multi-drug resistance efflux pump PmrA (pmrA).